The sequence spans 473 residues: Venom prothrombin activator vestarin-D1 (473 aa).

The signal sequence occupies residues 1 to 20 (MAPQLLLCLIQTFLWSLPEA). Residues 21-40 (ESNVFLKSNVANRFLQRTKR) constitute a propeptide that is removed on maturation. Residues 41 to 86 (ANSGFEEIYPANFERECVEERCSKEEAREVFEDDEKTEAFWTVYVD) enclose the Gla domain. Glu46, Glu47, Glu54, Glu56, Glu59, Glu60, Glu65, Glu66, Glu69, Glu72, and Glu75 each carry 4-carboxyglutamate. Cysteines 57 and 62 form a disulfide. Residues 86-122 (DGDQCLSNPCHYGGTCKDGIGSYTCTCLAGYEGKNCE) enclose the EGF-like 1; calcium-binding domain. Intrachain disulfides connect Cys90–Cys101, Cys95–Cys110, Cys112–Cys121, Cys129–Cys140, Cys136–Cys149, Cys151–Cys164, Cys172–Cys335, Cys235–Cys240, Cys383–Cys397, and Cys408–Cys436. Ser92 is a glycosylation site (O-linked (Hex...) serine). In terms of domain architecture, EGF-like 2 spans 129–164 (CRVDNGNCWHFCKPVQNDTQCSCAEGYRLGDNGFSC). Positions 182–228 (REASLPDFQTDFSDDYDAIDENNLIETVQSQSATLLKKSDNPNPDIR) are cleaved as a propeptide — activation peptide. The Peptidase S1 domain occupies 229-460 (IVNGLDCKLG…FLPWIKTIMR (232 aa)). Catalysis depends on His270, which acts as the Charge relay system. N-linked (GlcNAc...) asparagine glycosylation occurs at Asn273. Residue Asp315 is the Charge relay system of the active site. Residue Ser412 is the Charge relay system of the active site.

This sequence belongs to the peptidase S1 family. Snake venom subfamily. Heterodimer of a light chain and a heavy chain; disulfide-linked. In terms of processing, the vitamin K-dependent, enzymatic carboxylation of some glutamate residues allows the modified protein to bind calcium. In terms of tissue distribution, expressed by the venom gland.

It localises to the secreted. It carries out the reaction Selective cleavage of Arg-|-Thr and then Arg-|-Ile bonds in prothrombin to form thrombin.. In terms of biological role, snake prothrombin activator that attacks the hemostatic system of prey. This protein is functionally similar to blood coagulation factor Xa. This chain is Venom prothrombin activator vestarin-D1, found in Demansia vestigiata (Lesser black whip snake).